A 770-amino-acid chain; its full sequence is Low-density lipoprotein receptor-related protein 3 (770 aa).

The N-terminal stretch at 1-36 is a signal peptide; sequence MEKRAAAGPEGAPGARAPLAVVCLVNLFLTGRLSSA. The Extracellular segment spans residues 37 to 496; sequence VPALAACSGK…HGCLAAVPRK (460 aa). 9 cysteine pairs are disulfide-bonded: C43/C72, C99/C120, C166/C178, C173/C191, C185/C200, C212/C227, C219/C240, C234/C249, and C254/C282. The CUB 1 domain maps to 43–159; it reads CSGKLEQHTE…QGFRLSYIRG (117 aa). A glycan (N-linked (GlcNAc...) asparagine) is linked at N71. LDL-receptor class A domains are found at residues 165 to 201 and 211 to 250; these read SCQT…GNCS and LCPG…AGCP. N199 carries an N-linked (GlcNAc...) asparagine glycan. Positions 254–365 constitute a CUB 2 domain; that stretch reads CGRRLGSFYG…HGFNATYQVK (112 aa). N-linked (GlcNAc...) asparagine glycosylation occurs at N359. LDL-receptor class A domains are found at residues 415 to 453 and 454 to 490; these read ACPP…KNCF and SCQP…HGCL. Disulfide bonds link C416-C430, C423-C443, C437-C452, C455-C467, C462-C480, and C474-C489. A helical membrane pass occupies residues 497-517; that stretch reads VITAALIGSLVCGLLLVIALG. Over 518 to 770 the chain is Cytoplasmic; it reads CAFKLYSLRT…ASDDEALLVC (253 aa). The disordered stretch occupies residues 639–753; it reads LLQAAPGPVP…PLGVCRSPPP (115 aa). Positions 689–703 are enriched in basic and acidic residues; sequence RDPEYRPEDKERKAC.

Belongs to the LDLR family. As to quaternary structure, binds GGA1 and GGA2.

It is found in the membrane. The protein resides in the coated pit. Its function is as follows. Probable receptor, which may be involved in the internalization of lipophilic molecules and/or signal transduction. Its precise role is however unclear, since it does not bind to very low density lipoprotein (VLDL) or to LRPAP1 in vitro. This is Low-density lipoprotein receptor-related protein 3 (Lrp3) from Rattus norvegicus (Rat).